The sequence spans 373 residues: Lipoyl amidotransferase LIPT1, mitochondrial (373 aa).

Residues 1-25 constitute a mitochondrion transit peptide; it reads MLIPFSMKNCFQLLCNLKVPAAGFK. Residues 57-243 enclose the BPL/LPL catalytic domain; that stretch reads LEGKPVLFLW…EYATSHQIDN (187 aa). (R)-lipoyl-5'-AMP-binding residues include Tyr-107, Arg-151, Lys-161, Thr-179, Thr-208, and Ala-210.

Belongs to the LplA family.

It is found in the mitochondrion. It catalyses the reaction N(6)-[(R)-lipoyl]-L-lysyl-[glycine-cleavage complex H protein] + L-lysyl-[lipoyl-carrier protein] = L-lysyl-[glycine-cleavage complex H protein] + N(6)-[(R)-lipoyl]-L-lysyl-[lipoyl-carrier protein]. The catalysed reaction is (R)-lipoyl-5'-AMP + L-lysyl-[lipoyl-carrier protein] = N(6)-[(R)-lipoyl]-L-lysyl-[lipoyl-carrier protein] + AMP + 2 H(+). Its pathway is protein modification; protein lipoylation via exogenous pathway; protein N(6)-(lipoyl)lysine from lipoate: step 2/2. Its activity is regulated as follows. Inhibited by lipoyl-AMP analogs including hexanoyl-, octanoyl- and decanoyl-AMP. Functionally, lipoyl amidotransferase that catalyzes the transfer of lipoyl moieties from lipoyl-protein H of the glycine cleavage system (lipoyl-GCSH) to E2 subunits of the pyruvate dehydrogenase complex (PDCE2). Unable to catalyze the transfer of octanoyl from octanoyl-GCSH to PDCE2. In vitro, it is also able to catalyze the transfer of the lipoyl group from lipoyl-AMP to the specific lysine residue of lipoyl domains of lipoate-dependent enzymes but this reaction may not be physiologically relevant. This is Lipoyl amidotransferase LIPT1, mitochondrial (LIPT1) from Bos taurus (Bovine).